The following is a 325-amino-acid chain: Brorin (325 aa).

The N-terminal stretch at 1-27 (MPSSTAMAVGALSSSLLVTCCLMVALC) is a signal peptide. Residues 37-121 (AQAPEQPGQE…RPRGDTPQAE (85 aa)) are disordered. 2 stretches are compositionally biased toward basic and acidic residues: residues 44–56 (GQEK…RDGP) and 64–78 (RPAR…DWKS). The Mediates cell adhesion signature appears at 114 to 116 (RGD). VWFC domains lie at 153–212 (KGCV…PQCK) and 216–274 (NYCE…PICK).

As to quaternary structure, peripherally associated with AMPAR complex. AMPAR complex consists of an inner core made of 4 pore-forming GluA/GRIA proteins (GRIA1, GRIA2, GRIA3 and GRIA4) and 4 major auxiliary subunits arranged in a twofold symmetry. One of the two pairs of distinct binding sites is occupied either by CNIH2, CNIH3 or CACNG2, CACNG3. The other harbors CACNG2, CACNG3, CACNG4, CACNG8 or GSG1L. This inner core of AMPAR complex is complemented by outer core constituents binding directly to the GluA/GRIA proteins at sites distinct from the interaction sites of the inner core constituents. Outer core constituents include at least PRRT1, PRRT2, CKAMP44/SHISA9, FRRS1L and NRN1. The proteins of the inner and outer core serve as a platform for other, more peripherally associated AMPAR constituents, including VWC2. Alone or in combination, these auxiliary subunits control the gating and pharmacology of the AMPAR complex and profoundly impact their biogenesis and protein processing.

It is found in the secreted. Its subcellular location is the extracellular space. The protein localises to the extracellular matrix. The protein resides in the basement membrane. It localises to the synapse. BMP antagonist which may play a role in neural development. Promotes cell adhesion. In Homo sapiens (Human), this protein is Brorin (VWC2).